Here is a 340-residue protein sequence, read N- to C-terminus: Ketol-acid reductoisomerase (NADP(+)) (340 aa).

In terms of domain architecture, KARI N-terminal Rossmann spans 1 to 182; it reads MRVYYDRDCD…GGGRSGIIET (182 aa). NADP(+)-binding positions include 24-27, Arg48, Ser51, Ser53, and 83-86; these read YGSQ and DELQ. His108 is a catalytic residue. Gly134 is an NADP(+) binding site. The region spanning 183–329 is the KARI C-terminal knotted domain; sequence NFREECETDL…ETLRGMMPWI (147 aa). Residues Asp191, Glu195, Glu227, and Glu231 each coordinate Mg(2+). Ser252 is a binding site for substrate.

Belongs to the ketol-acid reductoisomerase family. The cofactor is Mg(2+).

The enzyme catalyses (2R)-2,3-dihydroxy-3-methylbutanoate + NADP(+) = (2S)-2-acetolactate + NADPH + H(+). It catalyses the reaction (2R,3R)-2,3-dihydroxy-3-methylpentanoate + NADP(+) = (S)-2-ethyl-2-hydroxy-3-oxobutanoate + NADPH + H(+). The protein operates within amino-acid biosynthesis; L-isoleucine biosynthesis; L-isoleucine from 2-oxobutanoate: step 2/4. It participates in amino-acid biosynthesis; L-valine biosynthesis; L-valine from pyruvate: step 2/4. In terms of biological role, involved in the biosynthesis of branched-chain amino acids (BCAA). Catalyzes an alkyl-migration followed by a ketol-acid reduction of (S)-2-acetolactate (S2AL) to yield (R)-2,3-dihydroxy-isovalerate. In the isomerase reaction, S2AL is rearranged via a Mg-dependent methyl migration to produce 3-hydroxy-3-methyl-2-ketobutyrate (HMKB). In the reductase reaction, this 2-ketoacid undergoes a metal-dependent reduction by NADPH to yield (R)-2,3-dihydroxy-isovalerate. In Roseobacter denitrificans (strain ATCC 33942 / OCh 114) (Erythrobacter sp. (strain OCh 114)), this protein is Ketol-acid reductoisomerase (NADP(+)).